Consider the following 301-residue polypeptide: Probable alpha-L-glutamate ligase (301 aa).

The region spanning 104–287 (LQLLSRRGIG…VAGIIIEHLE (184 aa)) is the ATP-grasp domain. ATP is bound by residues K141, 178–179 (EY), D187, and 211–213 (RSN). Mg(2+)-binding residues include D248, E260, and N262. D248, E260, and N262 together coordinate Mn(2+).

The protein belongs to the RimK family. Mg(2+) is required as a cofactor. Requires Mn(2+) as cofactor.

This Pseudomonas fluorescens (strain SBW25) protein is Probable alpha-L-glutamate ligase.